The chain runs to 367 residues: Protein RecA (367 aa).

73–80 lines the ATP pocket; it reads GPESSGKT. Positions 345 to 367 are disordered; it reads DEPVAKKASAKESKEAKELKEVE.

It belongs to the RecA family.

The protein resides in the cytoplasm. In terms of biological role, can catalyze the hydrolysis of ATP in the presence of single-stranded DNA, the ATP-dependent uptake of single-stranded DNA by duplex DNA, and the ATP-dependent hybridization of homologous single-stranded DNAs. It interacts with LexA causing its activation and leading to its autocatalytic cleavage. The chain is Protein RecA from Janthinobacterium sp. (strain Marseille) (Minibacterium massiliensis).